A 360-amino-acid chain; its full sequence is Holliday junction branch migration complex subunit RuvB (360 aa).

Residues 1–23 (MIASVGDSRYYPKSVANGEKSDQ) form a disordered region. A large ATPase domain (RuvB-L) region spans residues 12–204 (PKSVANGEKS…FGIVLRLEFY (193 aa)). Residues L43, R44, G85, K88, T89, T90, 151-153 (EDY), R194, Y204, and R241 contribute to the ATP site. T89 is a binding site for Mg(2+). A small ATPAse domain (RuvB-S) region spans residues 205–275 (TTEDLKIILK…TAQKALEMLE (71 aa)). Residues 278 to 360 (QHGFDEVDRR…KPPKKQDSLF (83 aa)) are head domain (RuvB-H). DNA is bound by residues R333 and R338.

This sequence belongs to the RuvB family. Homohexamer. Forms an RuvA(8)-RuvB(12)-Holliday junction (HJ) complex. HJ DNA is sandwiched between 2 RuvA tetramers; dsDNA enters through RuvA and exits via RuvB. An RuvB hexamer assembles on each DNA strand where it exits the tetramer. Each RuvB hexamer is contacted by two RuvA subunits (via domain III) on 2 adjacent RuvB subunits; this complex drives branch migration. In the full resolvosome a probable DNA-RuvA(4)-RuvB(12)-RuvC(2) complex forms which resolves the HJ.

It localises to the cytoplasm. It catalyses the reaction ATP + H2O = ADP + phosphate + H(+). The RuvA-RuvB-RuvC complex processes Holliday junction (HJ) DNA during genetic recombination and DNA repair, while the RuvA-RuvB complex plays an important role in the rescue of blocked DNA replication forks via replication fork reversal (RFR). RuvA specifically binds to HJ cruciform DNA, conferring on it an open structure. The RuvB hexamer acts as an ATP-dependent pump, pulling dsDNA into and through the RuvAB complex. RuvB forms 2 homohexamers on either side of HJ DNA bound by 1 or 2 RuvA tetramers; 4 subunits per hexamer contact DNA at a time. Coordinated motions by a converter formed by DNA-disengaged RuvB subunits stimulates ATP hydrolysis and nucleotide exchange. Immobilization of the converter enables RuvB to convert the ATP-contained energy into a lever motion, pulling 2 nucleotides of DNA out of the RuvA tetramer per ATP hydrolyzed, thus driving DNA branch migration. The RuvB motors rotate together with the DNA substrate, which together with the progressing nucleotide cycle form the mechanistic basis for DNA recombination by continuous HJ branch migration. Branch migration allows RuvC to scan DNA until it finds its consensus sequence, where it cleaves and resolves cruciform DNA. In Koribacter versatilis (strain Ellin345), this protein is Holliday junction branch migration complex subunit RuvB.